Consider the following 867-residue polypeptide: Putative ribosome biogenesis ATPase nvl (867 aa).

Positions 70–203 (LSSCESSENE…NNNNGNNKDN (134 aa)) are disordered. Polar residues predominate over residues 110 to 122 (EQLTSQYKQNIKN). 3 stretches are compositionally biased toward low complexity: residues 123–132 (TPPTTTTTTP), 141–172 (IPSNVNSNNNNNNNNNAINSNTTTNNVNTPNS), and 180–203 (NSSNGNNVFQFSNNNNNNGNNKDN). 257–264 (GPSGCGKT) contributes to the ATP binding site. Positions 351–370 (SSNNSTNEPNEQTEQQQQQQ) are disordered. 607 to 614 (GPPGCGKT) lines the ATP pocket. Positions 834–843 (DINKSRDKKP) are enriched in basic and acidic residues. A disordered region spans residues 834–855 (DINKSRDKKPNNSNNIPITNNI). The span at 844–855 (NNSNNIPITNNI) shows a compositional bias: low complexity.

This sequence belongs to the AAA ATPase family.

It is found in the nucleus. It localises to the nucleolus. The protein resides in the nucleoplasm. In terms of biological role, involved in ribosome biogenesis. This chain is Putative ribosome biogenesis ATPase nvl (nvl), found in Dictyostelium discoideum (Social amoeba).